A 287-amino-acid chain; its full sequence is Phosphatidylserine decarboxylase proenzyme (287 aa).

Residues D90, H147, and S252 each act as charge relay system; for autoendoproteolytic cleavage activity in the active site. Catalysis depends on S252, which acts as the Schiff-base intermediate with substrate; via pyruvic acid; for decarboxylase activity. S252 is subject to Pyruvic acid (Ser); by autocatalysis.

The protein belongs to the phosphatidylserine decarboxylase family. PSD-B subfamily. Prokaryotic type I sub-subfamily. In terms of assembly, heterodimer of a large membrane-associated beta subunit and a small pyruvoyl-containing alpha subunit. It depends on pyruvate as a cofactor. Is synthesized initially as an inactive proenzyme. Formation of the active enzyme involves a self-maturation process in which the active site pyruvoyl group is generated from an internal serine residue via an autocatalytic post-translational modification. Two non-identical subunits are generated from the proenzyme in this reaction, and the pyruvate is formed at the N-terminus of the alpha chain, which is derived from the carboxyl end of the proenzyme. The autoendoproteolytic cleavage occurs by a canonical serine protease mechanism, in which the side chain hydroxyl group of the serine supplies its oxygen atom to form the C-terminus of the beta chain, while the remainder of the serine residue undergoes an oxidative deamination to produce ammonia and the pyruvoyl prosthetic group on the alpha chain. During this reaction, the Ser that is part of the protease active site of the proenzyme becomes the pyruvoyl prosthetic group, which constitutes an essential element of the active site of the mature decarboxylase.

The protein localises to the cell membrane. The enzyme catalyses a 1,2-diacyl-sn-glycero-3-phospho-L-serine + H(+) = a 1,2-diacyl-sn-glycero-3-phosphoethanolamine + CO2. It functions in the pathway phospholipid metabolism; phosphatidylethanolamine biosynthesis; phosphatidylethanolamine from CDP-diacylglycerol: step 2/2. Functionally, catalyzes the formation of phosphatidylethanolamine (PtdEtn) from phosphatidylserine (PtdSer). This Pseudomonas putida (strain W619) protein is Phosphatidylserine decarboxylase proenzyme.